Consider the following 324-residue polypeptide: NAD(P)H-dependent D-xylose reductase xyl1 (324 aa).

Catalysis depends on Tyr50, which acts as the Proton donor. His112 serves as a coordination point for substrate. Residues 168-169 (SN), 217-226 (SSFGPTGFME), and 273-283 (KTSRPEVMAQN) contribute to the NAD(+) site.

This sequence belongs to the aldo/keto reductase family.

It carries out the reaction an alditol + NAD(+) = an aldose + NADH + H(+). It catalyses the reaction an alditol + NADP(+) = an aldose + NADPH + H(+). The catalysed reaction is xylitol + NAD(+) = D-xylose + NADH + H(+). The enzyme catalyses xylitol + NADP(+) = D-xylose + NADPH + H(+). The protein operates within carbohydrate metabolism; D-xylose degradation. It participates in carbohydrate degradation; L-arabinose degradation via L-arabinitol; D-xylulose 5-phosphate from L-arabinose (fungal route): step 1/5. Catalyzes the initial reaction in the xylose utilization pathway by reducing D-xylose into xylitol. Xylose is a major component of hemicelluloses such as xylan. Most fungi utilize D-xylose via three enzymatic reactions, xylose reductase (XR), xylitol dehydrogenase (XDH), and xylulokinase, to form xylulose 5-phosphate, which enters pentose phosphate pathway. Also major aldose reductase in pentose and D-galactose catabolism. Reduces the pentose L-arabinose and the hexose D-galactose to their respective polyols. Responsible for extracellular beta-galactosidase formation and cellulase induction during growth on lactose. This chain is NAD(P)H-dependent D-xylose reductase xyl1 (xyl1), found in Hypocrea jecorina (Trichoderma reesei).